The sequence spans 518 residues: Cytochrome P450 monooxygenase psoD (518 aa).

Cysteine 442 contacts heme.

Belongs to the cytochrome P450 family. The cofactor is heme.

Its pathway is secondary metabolite biosynthesis. Cytochrome P450 monooxygenase; part of the gene cluster that mediates the biosynthesis of pseurotin A, a competitive inhibitor of chitin synthase and an inducer of nerve-cell proliferation. The PKS-NRPS hybrid synthetase psoA is responsible for the biosynthesis of azaspirene, one of the first intermediates having the 1-oxa-7-azaspiro[4,4]-non-2-ene-4,6-dione core of pseurotin, via condensation of one acetyl-CoA, 4 malonyl-CoA, and a L-phenylalanine molecule. The dual-functional monooxygenase/methyltransferase psoF seems to be involved in the addition of the C3 methyl group onto the pseurotin scaffold. Azaspirene is then converted to synerazol through 4 steps including oxidation of C17 by the cytochrome P450 monooxygenase psoD, O-methylation of the hydroxy group of C8 by the methyltransferase psoC, and the trans-to-cis isomerization of the C13 olefin by the glutathione S-transferase psoE. The fourth step of synerazol production is performed by the dual-functional monooxygenase/methyltransferase psoF which seems to catalyze the epoxidation of the intermediate deepoxy-synerazol. Synerazol can be attacked by a water molecule nonenzymatically at two different positions to yield two diol products, pseurotin A and pseurotin D. This Aspergillus fumigatus (strain ATCC MYA-4609 / CBS 101355 / FGSC A1100 / Af293) (Neosartorya fumigata) protein is Cytochrome P450 monooxygenase psoD.